The primary structure comprises 330 residues: Ketol-acid reductoisomerase (NADP(+)) (330 aa).

The region spanning 2–181 (MEKYHETDAD…GATRAVVLET (180 aa)) is the KARI N-terminal Rossmann domain. NADP(+)-binding positions include 25-28 (YGSQ), arginine 48, serine 52, and 82-85 (DENQ). Histidine 107 is an active-site residue. Glycine 133 provides a ligand contact to NADP(+). Residues 182-327 (TFREETETDL…SELRAMMPQF (146 aa)) form the KARI C-terminal knotted domain. Residues aspartate 190, glutamate 194, glutamate 226, and glutamate 230 each coordinate Mg(2+). Serine 251 lines the substrate pocket.

It belongs to the ketol-acid reductoisomerase family. It depends on Mg(2+) as a cofactor.

It catalyses the reaction (2R)-2,3-dihydroxy-3-methylbutanoate + NADP(+) = (2S)-2-acetolactate + NADPH + H(+). The enzyme catalyses (2R,3R)-2,3-dihydroxy-3-methylpentanoate + NADP(+) = (S)-2-ethyl-2-hydroxy-3-oxobutanoate + NADPH + H(+). The protein operates within amino-acid biosynthesis; L-isoleucine biosynthesis; L-isoleucine from 2-oxobutanoate: step 2/4. Its pathway is amino-acid biosynthesis; L-valine biosynthesis; L-valine from pyruvate: step 2/4. Functionally, involved in the biosynthesis of branched-chain amino acids (BCAA). Catalyzes an alkyl-migration followed by a ketol-acid reduction of (S)-2-acetolactate (S2AL) to yield (R)-2,3-dihydroxy-isovalerate. In the isomerase reaction, S2AL is rearranged via a Mg-dependent methyl migration to produce 3-hydroxy-3-methyl-2-ketobutyrate (HMKB). In the reductase reaction, this 2-ketoacid undergoes a metal-dependent reduction by NADPH to yield (R)-2,3-dihydroxy-isovalerate. This is Ketol-acid reductoisomerase (NADP(+)) from Methanocorpusculum labreanum (strain ATCC 43576 / DSM 4855 / Z).